Reading from the N-terminus, the 366-residue chain is 3-isopropylmalate dehydrogenase (366 aa).

G76–E89 serves as a coordination point for NAD(+). 4 residues coordinate substrate: R96, R106, R134, and D219. Positions 219, 243, and 247 each coordinate Mg(2+). G277–N289 provides a ligand contact to NAD(+).

This sequence belongs to the isocitrate and isopropylmalate dehydrogenases family. LeuB type 1 subfamily. In terms of assembly, homodimer. Requires Mg(2+) as cofactor. It depends on Mn(2+) as a cofactor.

The protein resides in the cytoplasm. It catalyses the reaction (2R,3S)-3-isopropylmalate + NAD(+) = 4-methyl-2-oxopentanoate + CO2 + NADH. It functions in the pathway amino-acid biosynthesis; L-leucine biosynthesis; L-leucine from 3-methyl-2-oxobutanoate: step 3/4. Its function is as follows. Catalyzes the oxidation of 3-carboxy-2-hydroxy-4-methylpentanoate (3-isopropylmalate) to 3-carboxy-4-methyl-2-oxopentanoate. The product decarboxylates to 4-methyl-2 oxopentanoate. The protein is 3-isopropylmalate dehydrogenase of Oceanobacillus iheyensis (strain DSM 14371 / CIP 107618 / JCM 11309 / KCTC 3954 / HTE831).